Consider the following 209-residue polypeptide: Uracil phosphoribosyltransferase (209 aa).

5-phospho-alpha-D-ribose 1-diphosphate contacts are provided by residues Arg79, Arg104, and 131–139 (DPMLATGNS). Residues Ile194 and 199–201 (GDA) each bind uracil. Asp200 serves as a coordination point for 5-phospho-alpha-D-ribose 1-diphosphate.

Belongs to the UPRTase family. Mg(2+) serves as cofactor.

The enzyme catalyses UMP + diphosphate = 5-phospho-alpha-D-ribose 1-diphosphate + uracil. The protein operates within pyrimidine metabolism; UMP biosynthesis via salvage pathway; UMP from uracil: step 1/1. With respect to regulation, allosterically activated by GTP. Catalyzes the conversion of uracil and 5-phospho-alpha-D-ribose 1-diphosphate (PRPP) to UMP and diphosphate. The protein is Uracil phosphoribosyltransferase of Delftia acidovorans (strain DSM 14801 / SPH-1).